The following is a 444-amino-acid chain: Tubulin beta-8 chain (444 aa).

Residues 1-4 carry the MREI motif motif; sequence MREI. GTP-binding residues include glutamine 11, glutamate 69, serine 138, glycine 142, threonine 143, and glycine 144. Position 69 (glutamate 69) interacts with Mg(2+). Phosphoserine; by CDK1 is present on serine 172. 2 residues coordinate GTP: asparagine 204 and asparagine 226. Residues 423–444 form a disordered region; sequence QQYQDATAEEEEDEEYAEEEVA. The segment covering 429–444 has biased composition (acidic residues); it reads TAEEEEDEEYAEEEVA. Glutamate 436 is modified (5-glutamyl polyglutamate).

It belongs to the tubulin family. In terms of assembly, dimer of alpha and beta chains. A typical microtubule is a hollow water-filled tube with an outer diameter of 25 nm and an inner diameter of 15 nM. Alpha-beta heterodimers associate head-to-tail to form protofilaments running lengthwise along the microtubule wall with the beta-tubulin subunit facing the microtubule plus end conferring a structural polarity. Microtubules usually have 13 protofilaments but different protofilament numbers can be found in some organisms and specialized cells. The cofactor is Mg(2+). Post-translationally, some glutamate residues at the C-terminus are polyglutamylated, resulting in polyglutamate chains on the gamma-carboxyl group. Polyglutamylation plays a key role in microtubule severing by spastin (SPAST). SPAST preferentially recognizes and acts on microtubules decorated with short polyglutamate tails: severing activity by SPAST increases as the number of glutamates per tubulin rises from one to eight, but decreases beyond this glutamylation threshold. Glutamylation is also involved in cilia motility. In terms of processing, some glutamate residues at the C-terminus are monoglycylated but not polyglycylated due to the absence of functional TTLL10 in human. Monoglycylation is mainly limited to tubulin incorporated into cilia and flagella axonemes, which is required for their stability and maintenance. Flagella glycylation controls sperm motility. Both polyglutamylation and monoglycylation can coexist on the same protein on adjacent residues, and lowering glycylation levels increases polyglutamylation, and reciprocally. Phosphorylated on Ser-172 by CDK1 during the cell cycle, from metaphase to telophase, but not in interphase. This phosphorylation inhibits tubulin incorporation into microtubules. Expressed at a high level in oocytes, at different stages of development.

The protein localises to the cytoplasm. It localises to the cytoskeleton. Its subcellular location is the spindle. Its function is as follows. Tubulin is the major constituent of microtubules, a cylinder consisting of laterally associated linear protofilaments composed of alpha- and beta-tubulin heterodimers. Microtubules grow by the addition of GTP-tubulin dimers to the microtubule end, where a stabilizing cap forms. Below the cap, tubulin dimers are in GDP-bound state, owing to GTPase activity of alpha-tubulin. TUBB8 has a key role in meiotic spindle assembly and oocyte maturation. The polypeptide is Tubulin beta-8 chain (Homo sapiens (Human)).